The following is a 230-amino-acid chain: Cytochrome c oxidase subunit 2 (230 aa).

At 1–14 the chain is on the mitochondrial intermembrane side; sequence MAHPSQLGFQDAAS. Residues 15–45 traverse the membrane as a helical segment; it reads PVMEELLHFHDHTLMIVFLISTLVLYIIMAM. The Mitochondrial matrix segment spans residues 46-59; sequence VSTKLTNKYILDSQ. Residues 60–87 form a helical membrane-spanning segment; that stretch reads EIEIVWTILPAVILIMIALPSLRILYLM. At 88-230 the chain is on the mitochondrial intermembrane side; sequence DEINDPHLTI…SWSSLMLEEA (143 aa). Positions 161, 196, 198, 200, 204, and 207 each coordinate Cu cation. Glutamate 198 provides a ligand contact to Mg(2+).

The protein belongs to the cytochrome c oxidase subunit 2 family. Component of the cytochrome c oxidase (complex IV, CIV), a multisubunit enzyme composed of 14 subunits. The complex is composed of a catalytic core of 3 subunits MT-CO1, MT-CO2 and MT-CO3, encoded in the mitochondrial DNA, and 11 supernumerary subunits COX4I, COX5A, COX5B, COX6A, COX6B, COX6C, COX7A, COX7B, COX7C, COX8 and NDUFA4, which are encoded in the nuclear genome. The complex exists as a monomer or a dimer and forms supercomplexes (SCs) in the inner mitochondrial membrane with NADH-ubiquinone oxidoreductase (complex I, CI) and ubiquinol-cytochrome c oxidoreductase (cytochrome b-c1 complex, complex III, CIII), resulting in different assemblies (supercomplex SCI(1)III(2)IV(1) and megacomplex MCI(2)III(2)IV(2)). Found in a complex with TMEM177, COA6, COX18, COX20, SCO1 and SCO2. Interacts with TMEM177 in a COX20-dependent manner. Interacts with COX20. Interacts with COX16. Requires Cu cation as cofactor.

The protein localises to the mitochondrion inner membrane. The enzyme catalyses 4 Fe(II)-[cytochrome c] + O2 + 8 H(+)(in) = 4 Fe(III)-[cytochrome c] + 2 H2O + 4 H(+)(out). In terms of biological role, component of the cytochrome c oxidase, the last enzyme in the mitochondrial electron transport chain which drives oxidative phosphorylation. The respiratory chain contains 3 multisubunit complexes succinate dehydrogenase (complex II, CII), ubiquinol-cytochrome c oxidoreductase (cytochrome b-c1 complex, complex III, CIII) and cytochrome c oxidase (complex IV, CIV), that cooperate to transfer electrons derived from NADH and succinate to molecular oxygen, creating an electrochemical gradient over the inner membrane that drives transmembrane transport and the ATP synthase. Cytochrome c oxidase is the component of the respiratory chain that catalyzes the reduction of oxygen to water. Electrons originating from reduced cytochrome c in the intermembrane space (IMS) are transferred via the dinuclear copper A center (CU(A)) of subunit 2 and heme A of subunit 1 to the active site in subunit 1, a binuclear center (BNC) formed by heme A3 and copper B (CU(B)). The BNC reduces molecular oxygen to 2 water molecules using 4 electrons from cytochrome c in the IMS and 4 protons from the mitochondrial matrix. This Squalus acanthias (Spiny dogfish) protein is Cytochrome c oxidase subunit 2 (MT-CO2).